Reading from the N-terminus, the 389-residue chain is 2-aminoethylphosphonate--pyruvate transaminase 1 (389 aa).

An N6-(pyridoxal phosphate)lysine modification is found at K196.

It belongs to the class-V pyridoxal-phosphate-dependent aminotransferase family. PhnW subfamily. In terms of assembly, homodimer. Pyridoxal 5'-phosphate is required as a cofactor.

It carries out the reaction (2-aminoethyl)phosphonate + pyruvate = phosphonoacetaldehyde + L-alanine. Its function is as follows. Involved in phosphonate degradation. This is 2-aminoethylphosphonate--pyruvate transaminase 1 from Paraburkholderia xenovorans (strain LB400).